A 200-amino-acid polypeptide reads, in one-letter code: Holliday junction resolvase RecU (200 aa).

Threonine 85, aspartate 87, glutamate 100, and glutamine 119 together coordinate Mg(2+).

The protein belongs to the RecU family. Requires Mg(2+) as cofactor.

The protein resides in the cytoplasm. The catalysed reaction is Endonucleolytic cleavage at a junction such as a reciprocal single-stranded crossover between two homologous DNA duplexes (Holliday junction).. In terms of biological role, endonuclease that resolves Holliday junction intermediates in genetic recombination. Cleaves mobile four-strand junctions by introducing symmetrical nicks in paired strands. Promotes annealing of linear ssDNA with homologous dsDNA. Required for DNA repair, homologous recombination and chromosome segregation. The polypeptide is Holliday junction resolvase RecU (Bacillus cytotoxicus (strain DSM 22905 / CIP 110041 / 391-98 / NVH 391-98)).